Consider the following 356-residue polypeptide: GTPase Obg (356 aa).

Residues 2–160 form the Obg domain; it reads ESFVDEVAIE…KFLRLSLKLL (159 aa). An OBG-type G domain is found at 161–329; sequence ADVGIVGLPN…LLENMDEVFF (169 aa). GTP-binding positions include 167 to 174, 192 to 196, 215 to 218, 282 to 285, and 310 to 312; these read GLPNAGKS, FTTLS, DIPG, NKID, and SAD. Mg(2+) contacts are provided by serine 174 and threonine 194.

This sequence belongs to the TRAFAC class OBG-HflX-like GTPase superfamily. OBG GTPase family. Monomer. The cofactor is Mg(2+).

Its subcellular location is the cytoplasm. An essential GTPase which binds GTP, GDP and possibly (p)ppGpp with moderate affinity, with high nucleotide exchange rates and a fairly low GTP hydrolysis rate. Plays a role in control of the cell cycle, stress response, ribosome biogenesis and in those bacteria that undergo differentiation, in morphogenesis control. The polypeptide is GTPase Obg (Leptospira interrogans serogroup Icterohaemorrhagiae serovar copenhageni (strain Fiocruz L1-130)).